Consider the following 1102-residue polypeptide: PAN2-PAN3 deadenylation complex catalytic subunit PAN2 (1102 aa).

WD repeat units follow at residues 20–59 (DYPR…RYTA), 104–144 (DEME…IVKQ), and 269–308 (NVMS…HFTD). Residues 308 to 445 (DMAIPIEMPK…STDELESLKP (138 aa)) are linker. The tract at residues 423–442 (AVPDPKVEQVPESSTDELES) is disordered. The USP domain occupies 446 to 833 (EAPPIYRNLE…LPAVLLFQVK (388 aa)). Residues 881-1054 (VGLDTEFVSL…EDARTALKLY (174 aa)) form the Exonuclease domain. Positions 884, 886, 993, and 1046 each coordinate a divalent metal cation.

This sequence belongs to the peptidase C19 family. PAN2 subfamily. In terms of assembly, forms a heterotrimer with an asymmetric homodimer of the regulatory subunit PAN3 to form the poly(A)-nuclease (PAN) deadenylation complex. The cofactor is a divalent metal cation.

Its subcellular location is the cytoplasm. It carries out the reaction Exonucleolytic cleavage of poly(A) to 5'-AMP.. Its activity is regulated as follows. Positively regulated by the regulatory subunit PAN3. Catalytic subunit of the poly(A)-nuclease (PAN) deadenylation complex, one of two cytoplasmic mRNA deadenylases involved in mRNA turnover. PAN specifically shortens poly(A) tails of RNA and the activity is stimulated by poly(A)-binding protein PAB1. PAN deadenylation is followed by rapid degradation of the shortened mRNA tails by the CCR4-NOT complex. Deadenylated mRNAs are then degraded by two alternative mechanisms, namely exosome-mediated 3'-5' exonucleolytic degradation, or deadenylation-dependent mRNA decaping and subsequent 5'-3' exonucleolytic degradation by XRN1. May also be involved in post-transcriptional maturation of mRNA poly(A) tails. This is PAN2-PAN3 deadenylation complex catalytic subunit PAN2 from Chaetomium globosum (strain ATCC 6205 / CBS 148.51 / DSM 1962 / NBRC 6347 / NRRL 1970) (Soil fungus).